A 268-amino-acid chain; its full sequence is F-actin-capping protein subunit alpha (268 aa).

Ser2 is modified (N-acetylserine). Ser17 is subject to Phosphoserine.

It belongs to the F-actin-capping protein alpha subunit family. As to quaternary structure, component of the F-actin capping complex, composed of a heterodimer of an alpha and a beta subunit. Interacts with BSP1 (via C-terminus); leading to recruitment of the F-actin capping complex to actin cortical patches and the acomyosin contractile ring.

Its subcellular location is the cytoplasm. It localises to the cytoskeleton. The protein localises to the actin patch. Its function is as follows. F-actin-capping proteins bind in a Ca(2+)-independent manner to the fast growing ends of actin filaments (barbed end) thereby blocking the exchange of subunits at these ends. Unlike other capping proteins (such as gelsolin and severin), these proteins do not sever actin filaments. This Saccharomyces cerevisiae (strain ATCC 204508 / S288c) (Baker's yeast) protein is F-actin-capping protein subunit alpha (CAP1).